The following is a 354-amino-acid chain: S-adenosylmethionine:tRNA ribosyltransferase-isomerase (354 aa).

It belongs to the QueA family. In terms of assembly, monomer.

Its subcellular location is the cytoplasm. It carries out the reaction 7-aminomethyl-7-carbaguanosine(34) in tRNA + S-adenosyl-L-methionine = epoxyqueuosine(34) in tRNA + adenine + L-methionine + 2 H(+). The protein operates within tRNA modification; tRNA-queuosine biosynthesis. Its function is as follows. Transfers and isomerizes the ribose moiety from AdoMet to the 7-aminomethyl group of 7-deazaguanine (preQ1-tRNA) to give epoxyqueuosine (oQ-tRNA). In Salmonella paratyphi C (strain RKS4594), this protein is S-adenosylmethionine:tRNA ribosyltransferase-isomerase.